We begin with the raw amino-acid sequence, 114 residues long: Large ribosomal subunit protein bL19 (114 aa).

Belongs to the bacterial ribosomal protein bL19 family.

In terms of biological role, this protein is located at the 30S-50S ribosomal subunit interface and may play a role in the structure and function of the aminoacyl-tRNA binding site. In Lactococcus lactis subsp. cremoris (strain MG1363), this protein is Large ribosomal subunit protein bL19.